A 132-amino-acid chain; its full sequence is Cytochrome B5 isoform C (132 aa).

A Cytochrome b5 heme-binding domain is found at 2 to 78; that stretch reads ANLISFHDVA…MKKYCIGDVD (77 aa). Positions 37 and 61 each coordinate heme. The helical transmembrane segment at 110–129 threads the bilayer; that stretch reads LLIYLIPLLILGVAFALRFY.

This sequence belongs to the cytochrome b5 family. Interacts with CER1, BI-1, FAH1 and FAH2.

The protein resides in the endoplasmic reticulum membrane. Functionally, membrane bound hemoprotein which function as an electron carrier for several membrane bound oxygenases, including fatty acid desaturases. The protein is Cytochrome B5 isoform C of Arabidopsis thaliana (Mouse-ear cress).